Consider the following 414-residue polypeptide: Gamma-glutamyl phosphate reductase (414 aa).

This sequence belongs to the gamma-glutamyl phosphate reductase family.

It localises to the cytoplasm. The catalysed reaction is L-glutamate 5-semialdehyde + phosphate + NADP(+) = L-glutamyl 5-phosphate + NADPH + H(+). It functions in the pathway amino-acid biosynthesis; L-proline biosynthesis; L-glutamate 5-semialdehyde from L-glutamate: step 2/2. In terms of biological role, catalyzes the NADPH-dependent reduction of L-glutamate 5-phosphate into L-glutamate 5-semialdehyde and phosphate. The product spontaneously undergoes cyclization to form 1-pyrroline-5-carboxylate. The sequence is that of Gamma-glutamyl phosphate reductase from Caldanaerobacter subterraneus subsp. tengcongensis (strain DSM 15242 / JCM 11007 / NBRC 100824 / MB4) (Thermoanaerobacter tengcongensis).